Consider the following 1296-residue polypeptide: DNA-directed RNA polymerase subunit beta' (1296 aa).

The Zn(2+) site is built by C60, C62, C75, and C78. Positions 188–209 are disordered; the sequence is GAKGDARRKVRESAEREMRQIR. Residues D535, D537, and D539 each contribute to the Mg(2+) site. Zn(2+) is bound by residues C877, C954, C961, and C964.

This sequence belongs to the RNA polymerase beta' chain family. As to quaternary structure, the RNAP catalytic core consists of 2 alpha, 1 beta, 1 beta' and 1 omega subunit. When a sigma factor is associated with the core the holoenzyme is formed, which can initiate transcription. Mg(2+) is required as a cofactor. Zn(2+) serves as cofactor.

The catalysed reaction is RNA(n) + a ribonucleoside 5'-triphosphate = RNA(n+1) + diphosphate. Functionally, DNA-dependent RNA polymerase catalyzes the transcription of DNA into RNA using the four ribonucleoside triphosphates as substrates. This Parafrankia sp. (strain EAN1pec) protein is DNA-directed RNA polymerase subunit beta'.